The primary structure comprises 44 residues: Small, acid-soluble spore protein N (44 aa).

The disordered stretch occupies residues 1 to 44; sequence MGNPKKNSKDFAPNHIGTQSKKAGGNKGKQMQDQTGKQPIVDNG.

It belongs to the SspN family.

Its subcellular location is the spore core. This is Small, acid-soluble spore protein N from Bacillus anthracis (strain A0248).